Consider the following 996-residue polypeptide: Conserved oligomeric Golgi complex subunit 7 (996 aa).

3 disordered regions span residues Thr-533–Gly-571, Gln-828–Asp-867, and Gln-950–Asn-974. The span at Arg-557–Gly-571 shows a compositional bias: low complexity. Residues Gln-828–Gln-844 show a composition bias toward basic and acidic residues. Composition is skewed to low complexity over residues Asp-849–Asn-858 and Asn-953–Asn-974.

It belongs to the COG7 family. In terms of assembly, component of the conserved oligomeric Golgi complex which is composed of eight different subunits and is required for normal Golgi morphology and localization.

The protein localises to the golgi apparatus membrane. Functionally, required for normal Golgi function. This chain is Conserved oligomeric Golgi complex subunit 7 (cog7), found in Dictyostelium discoideum (Social amoeba).